A 264-amino-acid chain; its full sequence is MICOS complex subunit MIC27 (264 aa).

A mitochondrion-targeting transit peptide spans 1–27 (MAALRMGKLTTMPTGLIYASISVHVAK). Residues 28 to 110 (EEESKKQLVK…YVYLKNPPRD (83 aa)) lie on the Mitochondrial intermembrane side of the membrane. A helical membrane pass occupies residues 111-129 (FLPKIGVITVSGLAGFISA). At 130–137 (RKGSRFKR) the chain is on the mitochondrial matrix side. The helical transmembrane segment at 138-155 (IAYPLGLATLGATVCYPV) threads the bilayer. The Mitochondrial intermembrane segment spans residues 156–264 (QSVIIAKVAG…EDIDMYSTRS (109 aa)). Positions 189 to 198 (KLPEHKEKTK) are enriched in basic and acidic residues. A disordered region spans residues 189–264 (KLPEHKEKTK…EDIDMYSTRS (76 aa)). The span at 223-238 (AELSSETKTKSTSGAT) shows a compositional bias: low complexity. Over residues 245–256 (KLMDHGQSHPED) the composition is skewed to basic and acidic residues.

The protein belongs to the apolipoprotein O/MICOS complex subunit Mic27 family. Component of the mitochondrial contact site and cristae organizing system (MICOS) complex, composed of at least MICOS10/MIC10, CHCHD3/MIC19, CHCHD6/MIC25, APOOL/MIC27, IMMT/MIC60, APOO/MIC23/MIC26 and QIL1/MIC13. This complex was also known under the names MINOS or MitOS complex. The MICOS complex associates with mitochondrial outer membrane proteins SAMM50, MTX1 and MTX2 (together described as components of the mitochondrial outer membrane sorting assembly machinery (SAM) complex) and DNAJC11, mitochondrial inner membrane protein TMEM11 and with HSPA9. The MICOS and SAM complexes together with DNAJC11 are part of a large protein complex spanning both membranes termed the mitochondrial intermembrane space bridging (MIB) complex. Interacts with MICOS10/MIC10, IMMT/MIC60 and APOO/MIC23/MIC26.

It localises to the mitochondrion inner membrane. The protein resides in the mitochondrion. Its function is as follows. Component of the MICOS complex, a large protein complex of the mitochondrial inner membrane that plays crucial roles in the maintenance of crista junctions, inner membrane architecture, and formation of contact sites to the outer membrane. Specifically binds to cardiolipin (in vitro) but not to the precursor lipid phosphatidylglycerol. Plays a crucial role in crista junction formation and mitochondrial function. This Bos taurus (Bovine) protein is MICOS complex subunit MIC27 (APOL).